The following is a 180-amino-acid chain: Virion protein US10 homolog (180 aa).

It belongs to the herpesviridae US10 family. Post-translationally, phosphorylated.

It localises to the virion tegument. Its subcellular location is the host nucleus matrix. This is Virion protein US10 homolog (64) from Varicella-zoster virus (strain Dumas) (HHV-3).